The primary structure comprises 130 residues: Small ribosomal subunit protein uS9 (130 aa).

Belongs to the universal ribosomal protein uS9 family.

This Shigella sonnei (strain Ss046) protein is Small ribosomal subunit protein uS9.